Consider the following 372-residue polypeptide: ATP-sensitive inward rectifier potassium channel 1 (372 aa).

Topologically, residues 1 to 58 (MFKHLRRWFVTHIFGRSRQRARLVSKDGRCNIEFGNVDAQSRFIFFVDIWTTVLDLKW) are cytoplasmic. Phosphoserine; by SGK1 is present on Ser-25. A helical transmembrane segment spans residues 59–83 (RYKMTVFITAFLGSWFLFGLLWYVV). Over 84-108 (AYVHKDLPEFYPPDNRTPCVENING) the chain is Extracellular. N-linked (GlcNAc...) asparagine glycosylation is present at Asn-98. Residues 109-120 (MTSAFLFSLETQ) constitute an intramembrane region (helical; Pore-forming). The pore-forming intramembrane region spans 121-127 (VTIGYGF). The Selectivity filter signature appears at 122 to 127 (TIGYGF). The Extracellular portion of the chain corresponds to 128 to 136 (RFVTEQCAT). Residues 137 to 158 (AIFLLIFQSILGVIINSFMCGA) form a helical membrane-spanning segment. Residues 159–372 (ILAKISRPKK…EVDETDDTQM (214 aa)) are Cytoplasmic-facing. The polyphosphoinositide (PIP2)-binding stretch occupies residues 161 to 188 (AKISRPKKRAKTITFSKNAVISKRGGKL). 204-211 (GSHIYGKL) lines the ATP pocket.

The protein belongs to the inward rectifier-type potassium channel (TC 1.A.2.1) family. KCNJ1 subfamily. In terms of assembly, interacts with SGK1 and SLC9A3R2/NHERF2. In terms of processing, phosphorylation at Ser-25 by SGK1 is necessary for its expression at the cell membrane.

It is found in the cell membrane. The enzyme catalyses K(+)(in) = K(+)(out). Inhibited by WNK3. Activated by phosphatidylinositol 4,5 biphosphate (PtdIns(4,5)P2). Inward rectifier potassium channels are characterized by a greater tendency to allow potassium to flow into the cell rather than out of it. Their voltage dependence is regulated by the concentration of extracellular potassium; as external potassium is raised, the voltage range of the channel opening shifts to more positive voltages. The inward rectification is mainly due to the blockage of outward current by internal magnesium. This channel is activated by internal ATP and can be blocked by external barium. In the kidney, probably plays a major role in potassium homeostasis. This is ATP-sensitive inward rectifier potassium channel 1 (Kcnj1) from Mus musculus (Mouse).